The primary structure comprises 320 residues: E3 ubiquitin-protein ligase RZF1 (320 aa).

Ser2 is subject to N-acetylserine. The RING-type; atypical zinc-finger motif lies at 186–227 (CPVCKDEFELKSEAKQMPCHHIYHSDCIVPWLVQHNSCPVCR). The segment at 229-320 (ELPSRGSSSS…MGYSGWPFDY (92 aa)) is disordered. Composition is skewed to low complexity over residues 232 to 249 (SRGS…STNG) and 295 to 308 (QQQQ…QQQQ).

As to expression, expressed in seedlings and in flowers.

It catalyses the reaction S-ubiquitinyl-[E2 ubiquitin-conjugating enzyme]-L-cysteine + [acceptor protein]-L-lysine = [E2 ubiquitin-conjugating enzyme]-L-cysteine + N(6)-ubiquitinyl-[acceptor protein]-L-lysine.. E3 ubiquitin-protein ligase that promotes osmotic stress and abscisic acid (ABA) responses. Negatively regulates drought-mediated control of early seedling development, probably by influencing proline content, water loss, membrane ion leakage and the expression of dehydration stress-related genes (e.g. RAB18, RD29A, RD29B, AOX1A, ERD15, ERD1, COR15A, P5CS1 and P5CR). Modulates bZIP11 accumulation during rehydration following drought. This Arabidopsis thaliana (Mouse-ear cress) protein is E3 ubiquitin-protein ligase RZF1.